The chain runs to 664 residues: Methionine--tRNA ligase (664 aa).

The 'HIGH' region motif lies at 15–25 (YYPSGKAHIGH). The 'KMSKS' region signature appears at 310–314 (KMSKS). Lys-313 contacts ATP. Residues 563 to 664 (DFDKIDLRVA…SALPNGAKVK (102 aa)) enclose the tRNA-binding domain.

It belongs to the class-I aminoacyl-tRNA synthetase family. MetG type 2B subfamily. In terms of assembly, homodimer.

It localises to the cytoplasm. The catalysed reaction is tRNA(Met) + L-methionine + ATP = L-methionyl-tRNA(Met) + AMP + diphosphate. In terms of biological role, is required not only for elongation of protein synthesis but also for the initiation of all mRNA translation through initiator tRNA(fMet) aminoacylation. This Listeria monocytogenes serovar 1/2a (strain ATCC BAA-679 / EGD-e) protein is Methionine--tRNA ligase (metG).